The chain runs to 428 residues: Tyrosine--tRNA ligase (428 aa).

Residue tyrosine 41 participates in L-tyrosine binding. The short motif at 46-55 (PTADSLHLGH) is the 'HIGH' region element. L-tyrosine-binding residues include tyrosine 179 and glutamine 183. Residues 239–243 (KFGKT) carry the 'KMSKS' region motif. Lysine 242 contributes to the ATP binding site. In terms of domain architecture, S4 RNA-binding spans 361 to 418 (ADLMQALVDAELQPSRGQARKTIASNAVTINGEKQSDPEYIFNDEDRLFGRYTLLRRG).

The protein belongs to the class-I aminoacyl-tRNA synthetase family. TyrS type 1 subfamily. In terms of assembly, homodimer.

Its subcellular location is the cytoplasm. It carries out the reaction tRNA(Tyr) + L-tyrosine + ATP = L-tyrosyl-tRNA(Tyr) + AMP + diphosphate + H(+). Functionally, catalyzes the attachment of tyrosine to tRNA(Tyr) in a two-step reaction: tyrosine is first activated by ATP to form Tyr-AMP and then transferred to the acceptor end of tRNA(Tyr). The sequence is that of Tyrosine--tRNA ligase from Salmonella paratyphi C (strain RKS4594).